We begin with the raw amino-acid sequence, 317 residues long: Ribosomal protein L11 methyltransferase (317 aa).

The S-adenosyl-L-methionine site is built by T158, G179, D201, and N244.

This sequence belongs to the methyltransferase superfamily. PrmA family.

Its subcellular location is the cytoplasm. The enzyme catalyses L-lysyl-[protein] + 3 S-adenosyl-L-methionine = N(6),N(6),N(6)-trimethyl-L-lysyl-[protein] + 3 S-adenosyl-L-homocysteine + 3 H(+). Its function is as follows. Methylates ribosomal protein L11. The polypeptide is Ribosomal protein L11 methyltransferase (Streptococcus pyogenes serotype M28 (strain MGAS6180)).